Reading from the N-terminus, the 161-residue chain is Phosphopantetheine adenylyltransferase (161 aa).

Substrate is bound at residue Ser9. ATP-binding positions include 9–10 (SF) and His17. Residues Lys41, Leu73, and Lys87 each coordinate substrate. ATP is bound by residues 88–90 (GLR), Glu98, and 122–128 (FSFLSSS).

It belongs to the bacterial CoaD family. Homohexamer. Requires Mg(2+) as cofactor.

The protein resides in the cytoplasm. It carries out the reaction (R)-4'-phosphopantetheine + ATP + H(+) = 3'-dephospho-CoA + diphosphate. The protein operates within cofactor biosynthesis; coenzyme A biosynthesis; CoA from (R)-pantothenate: step 4/5. Its function is as follows. Reversibly transfers an adenylyl group from ATP to 4'-phosphopantetheine, yielding dephospho-CoA (dPCoA) and pyrophosphate. This is Phosphopantetheine adenylyltransferase from Nocardia farcinica (strain IFM 10152).